Here is a 693-residue protein sequence, read N- to C-terminus: Elongation factor G (693 aa).

In terms of domain architecture, tr-type G spans 8–282 (EKTRNIGIMA…AVIDYLPSPL (275 aa)). GTP is bound by residues 17–24 (AHVDAGKT), 81–85 (DTPGH), and 135–138 (NKMD).

It belongs to the TRAFAC class translation factor GTPase superfamily. Classic translation factor GTPase family. EF-G/EF-2 subfamily.

The protein resides in the cytoplasm. Its function is as follows. Catalyzes the GTP-dependent ribosomal translocation step during translation elongation. During this step, the ribosome changes from the pre-translocational (PRE) to the post-translocational (POST) state as the newly formed A-site-bound peptidyl-tRNA and P-site-bound deacylated tRNA move to the P and E sites, respectively. Catalyzes the coordinated movement of the two tRNA molecules, the mRNA and conformational changes in the ribosome. This Streptococcus pneumoniae (strain CGSP14) protein is Elongation factor G.